The chain runs to 99 residues: MSNSDNTTFATRILDWYQIHGRKTLPWQQDKTPYRVWVSEIMLQQTQVATVIPYYQRFMARFPDVQALAQAPIDEVLHHWTGLGYYARARNLHKAAQQI.

The active-site Proton donor/acceptor is the Glu40.

The protein belongs to the Nth/MutY family. As to quaternary structure, monomer. [4Fe-4S] cluster is required as a cofactor.

The catalysed reaction is Hydrolyzes free adenine bases from 7,8-dihydro-8-oxoguanine:adenine mismatched double-stranded DNA, leaving an apurinic site.. Adenine glycosylase active on G-A mispairs. MutY also corrects error-prone DNA synthesis past GO lesions which are due to the oxidatively damaged form of guanine: 7,8-dihydro-8-oxoguanine (8-oxo-dGTP). This is Adenine DNA glycosylase (mutY) from Aeromonas hydrophila.